Reading from the N-terminus, the 330-residue chain is DNA-directed RNA polymerase subunit alpha (330 aa).

The interval methionine 1–lysine 232 is alpha N-terminal domain (alpha-NTD). The segment at glutamate 248–glutamate 330 is alpha C-terminal domain (alpha-CTD).

Belongs to the RNA polymerase alpha chain family. Homodimer. The RNAP catalytic core consists of 2 alpha, 1 beta, 1 beta' and 1 omega subunit. When a sigma factor is associated with the core the holoenzyme is formed, which can initiate transcription.

It catalyses the reaction RNA(n) + a ribonucleoside 5'-triphosphate = RNA(n+1) + diphosphate. Functionally, DNA-dependent RNA polymerase catalyzes the transcription of DNA into RNA using the four ribonucleoside triphosphates as substrates. The polypeptide is DNA-directed RNA polymerase subunit alpha (Bacteroides thetaiotaomicron (strain ATCC 29148 / DSM 2079 / JCM 5827 / CCUG 10774 / NCTC 10582 / VPI-5482 / E50)).